Reading from the N-terminus, the 239-residue chain is Derlin-2 (239 aa).

The Cytoplasmic portion of the chain corresponds to 1–56; sequence MAYQSLRLEYLQIPPVSRAYTTACVLTTAAVQLELITPFQLYFNPELIFKHFQIWR. The chain crosses the membrane as a helical span at residues 57 to 77; the sequence is LITNFLFFGPVGFNFLFNMIF. Residues 78 to 98 lie on the Lumenal side of the membrane; the sequence is LYRYCRMLEEGSFRGRTADFV. A helical membrane pass occupies residues 99–119; it reads FMFLFGGFLMTLFGLFVSLVF. The Cytoplasmic portion of the chain corresponds to 120–150; the sequence is LGQAFTIMLVYVWSRRNPYVRMNFFGLLNFQ. Residues 151-171 traverse the membrane as a helical segment; that stretch reads APFLPWVLMGFSLLLGNSIIV. Asp172 is a topological domain (lumenal). Residues 173-193 traverse the membrane as a helical segment; sequence LLGIAVGHIYFFLEDVFPNQP. The Cytoplasmic portion of the chain corresponds to 194-239; the sequence is GGIRILKTPSILKAIFDTPDEDPNYNPLPEERPGGFAWGEGQRLGG. The segment at 215–239 is disordered; the sequence is DPNYNPLPEERPGGFAWGEGQRLGG. Residues 229–239 are compositionally biased toward gly residues; sequence FAWGEGQRLGG.

The protein belongs to the derlin family. As to quaternary structure, forms homo- and heterooligomers with DERL3 and, to a lesser extent, with DERL1. Interacts with the SEL1L/SYVN1 and VCP/SELENOS protein complexes. Mediates association between VCP and EDEM1, as well as that between VCP and the misfolded glycoproteins. Interacts with OS9. Interacts with SELENOK and SELENOS. Interacts with the signal recognition particle/SRP and the SRP receptor; in the process of endoplasmic reticulum stress-induced pre-emptive quality control. Interacts with CCDC47.

The protein resides in the endoplasmic reticulum membrane. Functionally, functional component of endoplasmic reticulum-associated degradation (ERAD) for misfolded lumenal glycoproteins, but not that of misfolded nonglycoproteins. May act by forming a channel that allows the retrotranslocation of misfolded glycoproteins into the cytosol where they are ubiquitinated and degraded by the proteasome. May mediate the interaction between VCP and misfolded glycoproteins. May also be involved in endoplasmic reticulum stress-induced pre-emptive quality control, a mechanism that selectively attenuates the translocation of newly synthesized proteins into the endoplasmic reticulum and reroutes them to the cytosol for proteasomal degradation. In Pongo abelii (Sumatran orangutan), this protein is Derlin-2.